The primary structure comprises 171 residues: Adenine phosphoribosyltransferase (171 aa).

This sequence belongs to the purine/pyrimidine phosphoribosyltransferase family. In terms of assembly, homodimer.

The protein resides in the cytoplasm. It carries out the reaction AMP + diphosphate = 5-phospho-alpha-D-ribose 1-diphosphate + adenine. It functions in the pathway purine metabolism; AMP biosynthesis via salvage pathway; AMP from adenine: step 1/1. Its function is as follows. Catalyzes a salvage reaction resulting in the formation of AMP, that is energically less costly than de novo synthesis. This Geotalea uraniireducens (strain Rf4) (Geobacter uraniireducens) protein is Adenine phosphoribosyltransferase.